Reading from the N-terminus, the 292-residue chain is Imipenem-hydrolyzing beta-lactamase (292 aa).

A signal peptide spans 1–27; that stretch reads MSLNVKQSRIAILFSSCLISISFFSQA. Residues cysteine 70 and cysteine 240 are joined by a disulfide bond. The Acyl-ester intermediate role is filled by serine 71. 236–238 is a substrate binding site; sequence KTG.

This sequence belongs to the class-A beta-lactamase family.

It carries out the reaction a beta-lactam + H2O = a substituted beta-amino acid. Hydrolyzes carbapenems such as imipenem, which are extended-spectrum beta-lactam antibiotics. In Enterobacter cloacae, this protein is Imipenem-hydrolyzing beta-lactamase (nmcA).